The following is a 77-amino-acid chain: Acyl carrier protein (77 aa).

The Carrier domain occupies 1–76 (MADFEKVKSI…DVTKFIDNLK (76 aa)). The residue at position 36 (Ser-36) is an O-(pantetheine 4'-phosphoryl)serine.

This sequence belongs to the acyl carrier protein (ACP) family. In terms of processing, 4'-phosphopantetheine is transferred from CoA to a specific serine of apo-ACP by AcpS. This modification is essential for activity because fatty acids are bound in thioester linkage to the sulfhydryl of the prosthetic group.

It is found in the cytoplasm. It participates in lipid metabolism; fatty acid biosynthesis. Its function is as follows. Carrier of the growing fatty acid chain in fatty acid biosynthesis. This chain is Acyl carrier protein, found in Leptospira borgpetersenii serovar Hardjo-bovis (strain JB197).